The chain runs to 356 residues: Uroporphyrinogen decarboxylase (356 aa).

Substrate is bound by residues 27–31, Asp77, Tyr154, Thr209, and His327; that span reads RQAGR.

The protein belongs to the uroporphyrinogen decarboxylase family. Homodimer.

The protein localises to the cytoplasm. The enzyme catalyses uroporphyrinogen III + 4 H(+) = coproporphyrinogen III + 4 CO2. It participates in porphyrin-containing compound metabolism; protoporphyrin-IX biosynthesis; coproporphyrinogen-III from 5-aminolevulinate: step 4/4. Its function is as follows. Catalyzes the decarboxylation of four acetate groups of uroporphyrinogen-III to yield coproporphyrinogen-III. The protein is Uroporphyrinogen decarboxylase of Hamiltonella defensa subsp. Acyrthosiphon pisum (strain 5AT).